Here is an 82-residue protein sequence, read N- to C-terminus: Small ribosomal subunit protein bS16 (82 aa).

The protein belongs to the bacterial ribosomal protein bS16 family.

This is Small ribosomal subunit protein bS16 from Rippkaea orientalis (strain PCC 8801 / RF-1) (Cyanothece sp. (strain PCC 8801)).